The primary structure comprises 644 residues: Methionine--tRNA ligase (644 aa).

The 'HIGH' region signature appears at 14–24 (YYPSAKLHIGN). The Zn(2+) site is built by C129, C132, C146, and C149. Residues 299-303 (KMSKS) carry the 'KMSKS' region motif. K302 lines the ATP pocket. The 103-residue stretch at 542 to 644 (DVDKLDLRVV…EDIPTGSIVR (103 aa)) folds into the tRNA-binding domain.

Belongs to the class-I aminoacyl-tRNA synthetase family. MetG type 2A subfamily. As to quaternary structure, homodimer. It depends on Zn(2+) as a cofactor.

It is found in the cytoplasm. It carries out the reaction tRNA(Met) + L-methionine + ATP = L-methionyl-tRNA(Met) + AMP + diphosphate. Is required not only for elongation of protein synthesis but also for the initiation of all mRNA translation through initiator tRNA(fMet) aminoacylation. This Clostridium acetobutylicum (strain ATCC 824 / DSM 792 / JCM 1419 / IAM 19013 / LMG 5710 / NBRC 13948 / NRRL B-527 / VKM B-1787 / 2291 / W) protein is Methionine--tRNA ligase (metG).